A 597-amino-acid polypeptide reads, in one-letter code: Arginine--tRNA ligase (597 aa).

The short motif at 125–135 (PNTNKPLHLGH) is the 'HIGH' region element.

The protein belongs to the class-I aminoacyl-tRNA synthetase family. In terms of assembly, monomer.

It is found in the cytoplasm. It carries out the reaction tRNA(Arg) + L-arginine + ATP = L-arginyl-tRNA(Arg) + AMP + diphosphate. In Bacteroides fragilis (strain YCH46), this protein is Arginine--tRNA ligase.